Here is an 848-residue protein sequence, read N- to C-terminus: Neuroligin-3 (848 aa).

A signal peptide spans 1–37 (MWLQLGLPSLSLSPTPTVGRSLCLILWFLSLVLRAST). Topologically, residues 38 to 709 (QAPAPTVNTH…NPRDYSTELS (672 aa)) are extracellular. The N-linked (GlcNAc...) asparagine glycan is linked to N98. The cysteines at positions 106 and 141 are disulfide-linked. The disordered stretch occupies residues 169–195 (CRKGGSGAKKQGEDLADNDGDEDEDIR). Residues 182–194 (DLADNDGDEDEDI) show a composition bias toward acidic residues. 2 disulfides stabilise this stretch: C340–C351 and C510–C544. Residue N545 is glycosylated (N-linked (GlcNAc...) asparagine). Composition is skewed to polar residues over residues 645–656 (TKVPPPDTTHSS) and 677–689 (AYSNENAPGSWNG). The segment at 645 to 691 (TKVPPPDTTHSSHITRRPNGKTWSTKRPAISPAYSNENAPGSWNGDQ) is disordered. The chain crosses the membrane as a helical span at residues 710-730 (VTIAVGASLLFLNVLAFAALY). Residues 731-848 (YRKDKRRQEP…LPNSHSTTRV (118 aa)) lie on the Cytoplasmic side of the membrane. S745 carries the post-translational modification Phosphoserine. A Phosphotyrosine modification is found at Y792.

The protein belongs to the type-B carboxylesterase/lipase family. As to quaternary structure, homodimer, and heterodimer with NLGN1 and NLGN2. Interacts with neurexins NRXN1, NRXN2 and NRXN3. Interaction with neurexins is mediated by heparan sulfate glycan modification on neurexin. Interacts (via its C-terminus) with DLG4/PSD-95 (via PDZ domain 3). In terms of processing, the N-terminus is blocked. In terms of tissue distribution, detected in brain and on hippocampus neurons, especially at excitatory synapses. Detected in retina (at protein level). Expressed in brain, spinal cord and dorsal root ganglion.

Its subcellular location is the cell membrane. The protein resides in the synapse. In terms of biological role, cell surface protein involved in cell-cell-interactions via its interactions with neurexin family members. Plays a role in synapse function and synaptic signal transmission, and probably mediates its effects by recruiting and clustering other synaptic proteins. May promote the initial formation of synapses, but is not essential for this. May also play a role in glia-glia or glia-neuron interactions in the developing peripheral nervous system. The protein is Neuroligin-3 (Nlgn3) of Rattus norvegicus (Rat).